Consider the following 334-residue polypeptide: Glyceraldehyde-3-phosphate dehydrogenase 2 (334 aa).

NAD(+) contacts are provided by residues 12-13 (RI), Asp-35, and Arg-79. D-glyceraldehyde 3-phosphate-binding positions include 152–154 (SCT), Thr-183, Arg-198, 211–212 (SG), and Arg-234. Catalysis depends on Cys-153, which acts as the Nucleophile. An NAD(+)-binding site is contributed by Asn-315.

Belongs to the glyceraldehyde-3-phosphate dehydrogenase family. As to quaternary structure, homotetramer.

It is found in the cytoplasm. It carries out the reaction D-glyceraldehyde 3-phosphate + phosphate + NAD(+) = (2R)-3-phospho-glyceroyl phosphate + NADH + H(+). It functions in the pathway carbohydrate degradation; glycolysis; pyruvate from D-glyceraldehyde 3-phosphate: step 1/5. Inhibited by pentalenolactone (PL). In terms of biological role, catalyzes the oxidative phosphorylation of glyceraldehyde 3-phosphate (G3P) to 1,3-bisphosphoglycerate (BPG) using the cofactor NAD. The first reaction step involves the formation of a hemiacetal intermediate between G3P and a cysteine residue, and this hemiacetal intermediate is then oxidized to a thioester, with concomitant reduction of NAD to NADH. The reduced NADH is then exchanged with the second NAD, and the thioester is attacked by a nucleophilic inorganic phosphate to produce BPG. This chain is Glyceraldehyde-3-phosphate dehydrogenase 2 (gap2), found in Streptomyces arenae.